The following is a 479-amino-acid chain: Putative F-box protein At1g67390 (479 aa).

One can recognise an F-box domain in the interval 40–88 (DDRISKLPDDVLVMILASLSTEDALKTSVLSTRWKNVWKQVPYLHFDLL).

The sequence is that of Putative F-box protein At1g67390 from Arabidopsis thaliana (Mouse-ear cress).